A 92-amino-acid polypeptide reads, in one-letter code: YcgL domain-containing protein PBPRA1080 (92 aa).

The YcgL domain maps to Met1–Lys84.

The sequence is that of YcgL domain-containing protein PBPRA1080 from Photobacterium profundum (strain SS9).